The sequence spans 251 residues: Capsid protein (251 aa).

Positions 3–20 match the Bipartite nuclear localization signal motif; that stretch reads KRDAPWRLMAGTSKVSRS. The short motif at 35–49 is the Nuclear localization signal element; sequence KAAAWVNRPMYRKPR. A zinc finger spans residues 63 to 80; it reads CEGPCKVQSYEQRHDISH. A Nuclear export signal motif is present at residues 96–117; the sequence is ITHRVGKRFCVKSVYILGKIWM. Positions 195 to 242 match the Bipartite nuclear localization signal motif; sequence RRFWKVNNHVVYNHQEAGKYENHTENALLLYMACTHASNPVYATLKIR.

It belongs to the geminiviridae capsid protein family. As to quaternary structure, homomultimer. Binds to single-stranded and double-stranded viral DNA. Interacts (via nuclear localization signals) with host importin alpha-1a.

It localises to the virion. It is found in the host nucleus. Its function is as follows. Encapsidates the viral DNA into characteristic twinned ('geminate') particles. Binds the genomic viral ssDNA and shuttles it into and out of the cell nucleus. The CP of bipartite geminiviruses is not required for cell-to-cell or systemic movement. This chain is Capsid protein, found in Squash leaf curl virus (SLCV).